The chain runs to 188 residues: MLKRLFVSGYKAHELGIFNEKNPGLAIIKKALKRELVRFLEEELEWVIISGQLGVEMWAAETVLELKKEYPHLKLAVITPFLNQEEKWKEETQDYYRNIVTQADYINSVYQTPYQGAWQLGEKDKFLLSNSDGILLVYDEENEGSPKFLSKLAAKKADNSDYQLFRINAYDLQAIAEEQQQELYNDSF.

The protein belongs to the UPF0398 family.

The protein is UPF0398 protein BBR47_29830 of Brevibacillus brevis (strain 47 / JCM 6285 / NBRC 100599).